Reading from the N-terminus, the 250-residue chain is MAVTKLVLVRHGESQWNNENRFTGWYDVDLSDKGRSEAKAAGQLLKDEGFAFDFAYTSVLKRAIHTLWNVLDELDQAWLPVEKSWKLNERHYGALQGLNKAETAEKYGDEQVKQWRRGFAITPPELTRDDERFPGHDPRYASLSDKELPLTESLALTIERVVPYWNETILPRIKSGERVIIAAHGNSLRALVKYLDNMGEDEILELNIPTGVPLVYEFDENFKPIKRYYLGNADEIAAKAAAVANQGKAK.

Substrate is bound by residues 10–17 (RHGESQWN), 23–24 (TG), Arg62, 89–92 (ERHY), Lys100, 116–117 (RR), and 185–186 (GN). The active-site Tele-phosphohistidine intermediate is the His11. Glu89 functions as the Proton donor/acceptor in the catalytic mechanism.

This sequence belongs to the phosphoglycerate mutase family. BPG-dependent PGAM subfamily. As to quaternary structure, homodimer.

The enzyme catalyses (2R)-2-phosphoglycerate = (2R)-3-phosphoglycerate. Its pathway is carbohydrate degradation; glycolysis; pyruvate from D-glyceraldehyde 3-phosphate: step 3/5. In terms of biological role, catalyzes the interconversion of 2-phosphoglycerate and 3-phosphoglycerate. This Pectobacterium carotovorum subsp. carotovorum (strain PC1) protein is 2,3-bisphosphoglycerate-dependent phosphoglycerate mutase.